Here is a 611-residue protein sequence, read N- to C-terminus: Cilia- and flagella-associated protein 100 (611 aa).

Positions 1 to 17 (MSEIPSTIVSKNMTNDK) are enriched in polar residues. Residues 1-57 (MSEIPSTIVSKNMTNDKNSLESMNISSSSSTEENPKKQARKNEEHGPDPSANPFHLS) form a disordered region. A compositionally biased stretch (low complexity) spans 20–32 (LESMNISSSSSTE). Residues 33–47 (ENPKKQARKNEEHGP) show a composition bias toward basic and acidic residues. 3 coiled-coil regions span residues 101-128 (SLRR…RAFR), 164-203 (ALDV…FDEF), and 230-257 (LEIR…KHYK). 2 disordered regions span residues 287-323 (EVSE…GQGT) and 338-380 (SPSY…GEEP). Positions 338–357 (SPSYLSSPQQGSQPSESSGG) are enriched in low complexity. Coiled coils occupy residues 393 to 432 (VFRE…MDRE) and 526 to 578 (QVKI…RGRT).

It belongs to the CFAP100 family.

The protein localises to the cytoplasm. The protein resides in the cytoskeleton. It localises to the cilium axoneme. In terms of biological role, may play a role in ciliary/flagellar motility by regulating the assembly and the activity of axonemal inner dynein arm. The polypeptide is Cilia- and flagella-associated protein 100 (Homo sapiens (Human)).